The primary structure comprises 64 residues: Small ribosomal subunit protein eS17 (64 aa).

The protein belongs to the eukaryotic ribosomal protein eS17 family.

The sequence is that of Small ribosomal subunit protein eS17 from Methanococcoides burtonii (strain DSM 6242 / NBRC 107633 / OCM 468 / ACE-M).